Here is a 303-residue protein sequence, read N- to C-terminus: Probable endonuclease 4 (303 aa).

Residues His-75, His-115, Glu-151, Asp-185, His-188, His-221, Asp-234, His-236, and Glu-266 each coordinate Zn(2+).

The protein belongs to the AP endonuclease 2 family. The cofactor is Zn(2+).

The enzyme catalyses Endonucleolytic cleavage to 5'-phosphooligonucleotide end-products.. Functionally, endonuclease IV plays a role in DNA repair. It cleaves phosphodiester bonds at apurinic or apyrimidinic (AP) sites, generating a 3'-hydroxyl group and a 5'-terminal sugar phosphate. This Ureaplasma parvum serovar 3 (strain ATCC 700970) protein is Probable endonuclease 4.